The sequence spans 517 residues: MQNNIIIFDTTLRDGEQALKASLTVKEKLQIALALERLGVDVMEVGFPVSSAGDFESVQTIARHIKNSRVCALSRAMDKDIDIAADALKVAEAFRIHTFIATSALHVEAKLRRTFDDVVEMAIQAVKRARRYTDDVEFSCEDAGRTGVDNICRIVEAAIKAGATTVNIPDTVGFCLPTEYGNIINQVMNRVPNIDKAVISVHCHNDLGMATANSLTAVQNGARQIECTINGIGERAGNTALEEVVMAIKTRQDIFKGLDTRINTQEIHRVSQMVSQLCNMPIQPNKAIVGSNAFAHSSGIHQDGMVKNKNTYEIMSPETIGLKKEKLNLTARSGRAAVKSHMDAMGYQQNDYDLDKLYAAFLKLADKKGQVFDYDLEALAFIDMQQGDEDRLSLDVITSQTISNLPASAFVQVELDGKKISQVSNGGNGPVDAVYNAILAITDMDITMLHYNLTAKGEGAEALGQVDIVVEHKGRRFHGVGLATDIVESSARALIHAINAIYRANKVADLKSHKISQ.

The 264-residue stretch at I5 to H268 folds into the Pyruvate carboxyltransferase domain. 4 residues coordinate Mn(2+): D14, H202, H204, and N238. A regulatory domain region spans residues S393–Q517.

The protein belongs to the alpha-IPM synthase/homocitrate synthase family. LeuA type 1 subfamily. In terms of assembly, homodimer. Mn(2+) serves as cofactor.

It localises to the cytoplasm. The enzyme catalyses 3-methyl-2-oxobutanoate + acetyl-CoA + H2O = (2S)-2-isopropylmalate + CoA + H(+). It participates in amino-acid biosynthesis; L-leucine biosynthesis; L-leucine from 3-methyl-2-oxobutanoate: step 1/4. Functionally, catalyzes the condensation of the acetyl group of acetyl-CoA with 3-methyl-2-oxobutanoate (2-ketoisovalerate) to form 3-carboxy-3-hydroxy-4-methylpentanoate (2-isopropylmalate). This chain is 2-isopropylmalate synthase, found in Histophilus somni (strain 129Pt) (Haemophilus somnus).